The chain runs to 1059 residues: Carbamoyl phosphate synthase large chain (1059 aa).

Positions 1 to 401 (MPKRSDIKKI…SLLKACRSLE (401 aa)) are carboxyphosphate synthetic domain. ATP is bound by residues Arg-129, Arg-169, Gly-175, Gly-176, Arg-208, Ile-210, Glu-215, Gly-241, Ile-242, His-243, Gln-284, and Glu-298. An ATP-grasp 1 domain is found at 133 to 327 (KQLMEELEQP…IAKLAAKIAV (195 aa)). The Mg(2+) site is built by Gln-284, Glu-298, and Asn-300. Residues Gln-284, Glu-298, and Asn-300 each contribute to the Mn(2+) site. The interval 402-546 (IGVYHNEMSE…YSTYEWENES (145 aa)) is oligomerization domain. Residues 547–929 (IKSDKESVIV…ALYKAFEASY (383 aa)) are carbamoyl phosphate synthetic domain. An ATP-grasp 2 domain is found at 671–861 (EQALKDLDIP…MAQVATNLIL (191 aa)). The ATP site is built by Arg-707, Ser-746, Ile-748, Glu-752, Gly-777, Val-778, His-779, Ser-780, Gln-820, and Glu-832. The Mg(2+) site is built by Gln-820, Glu-832, and Asn-834. Mn(2+) is bound by residues Gln-820, Glu-832, and Asn-834. Residues 930–1059 (LHLPTFGNVI…ESRSFTTEAI (130 aa)) enclose the MGS-like domain. Residues 930–1059 (LHLPTFGNVI…ESRSFTTEAI (130 aa)) form an allosteric domain region.

The protein belongs to the CarB family. Composed of two chains; the small (or glutamine) chain promotes the hydrolysis of glutamine to ammonia, which is used by the large (or ammonia) chain to synthesize carbamoyl phosphate. Tetramer of heterodimers (alpha,beta)4. Mg(2+) serves as cofactor. It depends on Mn(2+) as a cofactor.

It catalyses the reaction hydrogencarbonate + L-glutamine + 2 ATP + H2O = carbamoyl phosphate + L-glutamate + 2 ADP + phosphate + 2 H(+). The catalysed reaction is hydrogencarbonate + NH4(+) + 2 ATP = carbamoyl phosphate + 2 ADP + phosphate + 2 H(+). Its pathway is amino-acid biosynthesis; L-arginine biosynthesis; carbamoyl phosphate from bicarbonate: step 1/1. The protein operates within pyrimidine metabolism; UMP biosynthesis via de novo pathway; (S)-dihydroorotate from bicarbonate: step 1/3. Its function is as follows. Large subunit of the glutamine-dependent carbamoyl phosphate synthetase (CPSase). CPSase catalyzes the formation of carbamoyl phosphate from the ammonia moiety of glutamine, carbonate, and phosphate donated by ATP, constituting the first step of 2 biosynthetic pathways, one leading to arginine and/or urea and the other to pyrimidine nucleotides. The large subunit (synthetase) binds the substrates ammonia (free or transferred from glutamine from the small subunit), hydrogencarbonate and ATP and carries out an ATP-coupled ligase reaction, activating hydrogencarbonate by forming carboxy phosphate which reacts with ammonia to form carbamoyl phosphate. This chain is Carbamoyl phosphate synthase large chain, found in Streptococcus thermophilus (strain ATCC BAA-250 / LMG 18311).